The following is a 290-amino-acid chain: Acetyl-coenzyme A carboxylase carboxyl transferase subunit beta (290 aa).

Residues 27–290 (LWHKCPSCEA…FTHSPSPVSA (264 aa)) enclose the CoA carboxyltransferase N-terminal domain. Zn(2+)-binding residues include cysteine 31, cysteine 34, cysteine 50, and cysteine 53. The C4-type zinc-finger motif lies at 31–53 (CPSCEAVLYRPELEKTLDVCPKC).

The protein belongs to the AccD/PCCB family. In terms of assembly, acetyl-CoA carboxylase is a heterohexamer composed of biotin carboxyl carrier protein (AccB), biotin carboxylase (AccC) and two subunits each of ACCase subunit alpha (AccA) and ACCase subunit beta (AccD). Requires Zn(2+) as cofactor.

It is found in the cytoplasm. It catalyses the reaction N(6)-carboxybiotinyl-L-lysyl-[protein] + acetyl-CoA = N(6)-biotinyl-L-lysyl-[protein] + malonyl-CoA. It participates in lipid metabolism; malonyl-CoA biosynthesis; malonyl-CoA from acetyl-CoA: step 1/1. Its function is as follows. Component of the acetyl coenzyme A carboxylase (ACC) complex. Biotin carboxylase (BC) catalyzes the carboxylation of biotin on its carrier protein (BCCP) and then the CO(2) group is transferred by the transcarboxylase to acetyl-CoA to form malonyl-CoA. This chain is Acetyl-coenzyme A carboxylase carboxyl transferase subunit beta, found in Pseudomonas aeruginosa (strain UCBPP-PA14).